The primary structure comprises 261 residues: Ribosomal RNA small subunit methyltransferase A (261 aa).

S-adenosyl-L-methionine-binding residues include histidine 13, leucine 15, glycine 40, glutamate 61, aspartate 85, and asparagine 105.

It belongs to the class I-like SAM-binding methyltransferase superfamily. rRNA adenine N(6)-methyltransferase family. RsmA subfamily.

It localises to the cytoplasm. It catalyses the reaction adenosine(1518)/adenosine(1519) in 16S rRNA + 4 S-adenosyl-L-methionine = N(6)-dimethyladenosine(1518)/N(6)-dimethyladenosine(1519) in 16S rRNA + 4 S-adenosyl-L-homocysteine + 4 H(+). In terms of biological role, specifically dimethylates two adjacent adenosines (A1518 and A1519) in the loop of a conserved hairpin near the 3'-end of 16S rRNA in the 30S particle. May play a critical role in biogenesis of 30S subunits. The chain is Ribosomal RNA small subunit methyltransferase A from Flavobacterium johnsoniae (strain ATCC 17061 / DSM 2064 / JCM 8514 / BCRC 14874 / CCUG 350202 / NBRC 14942 / NCIMB 11054 / UW101) (Cytophaga johnsonae).